The following is a 713-amino-acid chain: MKKISKLTTALALSLSLALSLLGPAHAAPDTSVSNKQNFSTDVIYQIFTDRFSDGNPANNPTGPAFDGTCTNLRLYCGGDWQGIINKINDGYLTGMGVTAIWISQPVENIYSVINYSGVNNTAYHGYWARDFKKTNPAYGTIADFQNLIAAAHAKNIKVIIDFAPNHTSPASLDQPSFAENGKLYNNGRDEGGYTNDTHNLFHHNGGTDFSTTENGIYKNLYDLADLNHNNSTVDTYLKDAIKMWLDLGIDGIRMDAVKHMPFGWQKSFMATVNNYKPVFTFGEWFLGVNEVSAENHKFANVSGMSLLDFRFAQKVRQVFKDNTDNMYGLKSMLEGSATDYAQMEDQVTFIDNHDMERFHNNSANRRKLEQALAFTLTSRGVPAIYYGTEQYMSGGNDPDNRARIPSFSTTTTAYQVSKKLAPLRKSNPAIAYGTTQERWINNDVLIYERKFGNNVAVIAVNRNVNTSASITGLVTSLPAGSYTDVLGGLLNGNNLTVGSGGSASIFTLAAGGTAVWQYTTAVTAPTIGHVGPMMAKPGAAVTIDGRGFGATKGTVYFGTTAVTGANITAWEDTQIKVKIPAVAGGVYNIKIANSAGTSSNVHDNFEVLSGDQVSVRFVVNNATTALGQNVYLAGSVSELGNWDPAKAIGPLYNQVIYQYPTWYYDVTVPAGKTIEFKFLKKQGSTVTWEGGSNHTFTAPTSGTATINVNWQP.

Residues 1–27 (MKKISKLTTALALSLSLALSLLGPAHA) form the signal peptide. The segment at 28-165 (APDTSVSNKQ…NIKVIIDFAP (138 aa)) is A1. Ca(2+) is bound by residues Asp54, Asn56, Asn59, and Asn60. An intrachain disulfide couples Cys70 to Cys77. Positions 78 and 80 each coordinate Ca(2+). 127–128 (YW) is a substrate binding site. Asn166 contacts Ca(2+). Residues 166 to 229 (NHTSPASLDQ…NLYDLADLNH (64 aa)) form a b region. Position 167 (His167) interacts with substrate. Ile217 is a Ca(2+) binding site. 220-223 (NLYD) is a substrate binding site. Residue Asp226 participates in Ca(2+) binding. An A2 region spans residues 230-433 (NNSTVDTYLK…LRKSNPAIAY (204 aa)). Arg254 lines the substrate pocket. Asp256 (nucleophile) is an active-site residue. Position 259-260 (259-260 (KH)) interacts with substrate. Ca(2+) is bound at residue His260. The active-site Proton donor is the Glu284. His354, Asp398, and Arg402 together coordinate substrate. Residues 434-522 (GTTQERWINN…GTAVWQYTTA (89 aa)) form a c region. The interval 523–609 (VTAPTIGHVG…SNVHDNFEVL (87 aa)) is d. The IPT/TIG domain occupies 526-607 (PTIGHVGPMM…TSSNVHDNFE (82 aa)). In terms of domain architecture, CBM20 spans 608–713 (VLSGDQVSVR…TATINVNWQP (106 aa)). Residues 610–713 (SGDQVSVRFV…TATINVNWQP (104 aa)) form an e region.

The protein belongs to the glycosyl hydrolase 13 family. Monomer. The cofactor is Ca(2+).

The protein resides in the secreted. The catalysed reaction is Cyclizes part of a (1-&gt;4)-alpha-D-glucan chain by formation of a (1-&gt;4)-alpha-D-glucosidic bond.. The protein is Cyclomaltodextrin glucanotransferase (cgt) of Bacillus sp. (strain 17-1).